The chain runs to 308 residues: Acetylglutamate kinase (308 aa).

Substrate contacts are provided by residues 67 to 68 (GG), arginine 89, and asparagine 193.

The protein belongs to the acetylglutamate kinase family. ArgB subfamily.

Its subcellular location is the cytoplasm. It catalyses the reaction N-acetyl-L-glutamate + ATP = N-acetyl-L-glutamyl 5-phosphate + ADP. Its pathway is amino-acid biosynthesis; L-arginine biosynthesis; N(2)-acetyl-L-ornithine from L-glutamate: step 2/4. Its function is as follows. Catalyzes the ATP-dependent phosphorylation of N-acetyl-L-glutamate. This chain is Acetylglutamate kinase, found in Nitratidesulfovibrio vulgaris (strain DP4) (Desulfovibrio vulgaris).